We begin with the raw amino-acid sequence, 136 residues long: Histone H3.1/H3.2 (136 aa).

Positions 1–43 (MARTKQTARKSTGGKAPRKQLASKAARKSAPSTGGVKKPHRYK) are disordered. An N6,N6,N6-trimethyllysine; alternate modification is found at Lys5. Position 5 is an N6,N6-dimethyllysine; alternate (Lys5). Lys5 and Lys10 each carry N6-methyllysine; alternate. At Lys10 the chain carries N6-acetyllysine; alternate. Phosphoserine is present on Ser11. An N6,N6-dimethyllysine; alternate modification is found at Lys15. N6-acetyllysine; alternate occurs at positions 15, 19, 24, 28, and 37. An N6-methyllysine; alternate mark is found at Lys19, Lys24, Lys28, and Lys37. An N6,N6,N6-trimethyllysine; alternate mark is found at Lys28 and Lys37. Residues Lys28 and Lys37 each carry the N6,N6-dimethyllysine; alternate modification. An N6-acetyllysine mark is found at Lys57 and Lys65. At Lys80 the chain carries N6,N6,N6-trimethyllysine; alternate. N6,N6-dimethyllysine; alternate is present on Lys80. The residue at position 80 (Lys80) is an N6-methyllysine; alternate.

The protein belongs to the histone H3 family. The nucleosome is a histone octamer containing two molecules each of H2A, H2B, H3 and H4 assembled in one H3-H4 heterotetramer and two H2A-H2B heterodimers. The octamer wraps approximately 147 bp of DNA. Post-translationally, phosphorylated to form H3S10ph. H3S10ph promotes subsequent H3K14ac formation and is required for transcriptional activation through TBP recruitment to the promoters. In terms of processing, mono-, di- and trimethylated by the COMPASS complex to form H3K4me1/2/3. H3K4me activates gene expression by regulating transcription elongation and plays a role in telomere length maintenance. H3K4me enrichment correlates with transcription levels, and occurs in a 5' to 3' gradient with H3K4me3 enrichment at the 5'-end of genes, shifting to H3K4me2 and then H3K4me1. Methylated by SET2 to form H3K36me. H3K36me represses gene expression. Methylated by DOT1 to form H3K79me. H3K79me is required for association of SIR proteins with telomeric regions and for telomeric silencing. The COMPASS-mediated formation of H3K4me2/3 and the DOT1-mediated formation of H3K79me require H2BK123ub1. Acetylation of histone H3 leads to transcriptional activation. H3K14ac formation by GCN5 is promoted by H3S10ph. H3K14ac can also be formed by ESA1. H3K56ac formation occurs predominantly in newly synthesized H3 molecules during G1, S and G2/M of the cell cycle and may be involved in DNA repair.

Its subcellular location is the nucleus. It localises to the chromosome. Functionally, core component of nucleosome. Nucleosomes wrap and compact DNA into chromatin, limiting DNA accessibility to the cellular machineries which require DNA as a template. Histones thereby play a central role in transcription regulation, DNA repair, DNA replication and chromosomal stability. DNA accessibility is regulated via a complex set of post-translational modifications of histones, also called histone code, and nucleosome remodeling. The polypeptide is Histone H3.1/H3.2 (HHT1) (Lodderomyces elongisporus (strain ATCC 11503 / CBS 2605 / JCM 1781 / NBRC 1676 / NRRL YB-4239) (Yeast)).